Reading from the N-terminus, the 171-residue chain is Neuronal vesicle trafficking-associated protein 2 (171 aa).

A disordered region spans residues 1 to 21 (MVKLNSNPSEKGAKPPSVEDG). Residues 1–71 (MVKLNSNPSE…FRVPKIAEFT (71 aa)) are Cytoplasmic-facing. Residues 72–92 (VTILVSLALAFLACIVFLVVY) traverse the membrane as a helical; Signal-anchor for type II membrane protein segment. Residues 93–171 (KAFTYDHSCP…EPKPPKTQGH (79 aa)) lie on the Lumenal side of the membrane.

The protein belongs to the NSG family.

The protein localises to the membrane. It localises to the golgi apparatus. Its subcellular location is the trans-Golgi network membrane. The protein resides in the cell projection. It is found in the dendrite. The protein localises to the endosome membrane. It localises to the early endosome membrane. Its subcellular location is the late endosome membrane. The protein resides in the lysosome lumen. It is found in the cytoplasmic vesicle membrane. The protein localises to the golgi stack membrane. It localises to the endosome. Its subcellular location is the multivesicular body membrane. This chain is Neuronal vesicle trafficking-associated protein 2, found in Bos taurus (Bovine).